We begin with the raw amino-acid sequence, 415 residues long: Ankyrin repeat domain-containing protein 10 (415 aa).

ANK repeat units lie at residues 20–49, 56–85, 90–119, and 123–152; these read SLRF…RAHL, YGWT…SLNV, YAQT…NINK, and EGET…HTDL. The span at 303 to 325 shows a compositional bias: polar residues; it reads TGSNGVSNGQPLSSGQASVSANG. Positions 303-330 are disordered; the sequence is TGSNGVSNGQPLSSGQASVSANGTEEPE.

The polypeptide is Ankyrin repeat domain-containing protein 10 (Ankrd10) (Mus musculus (Mouse)).